Consider the following 213-residue polypeptide: Putative transmembrane protein DDB_G0267860 (213 aa).

The N-terminal stretch at 1-22 (MKTKILLLNFIIIFFLINVNLA) is a signal peptide. Residues 23 to 191 (IKKDSPFKEI…SSKFDSSTSS (169 aa)) are Extracellular-facing. 2 N-linked (GlcNAc...) asparagine glycosylation sites follow: Asn-92 and Asn-114. The chain crosses the membrane as a helical span at residues 192–212 (ISINTLAILSLLFLIFINKLI). A topological domain (cytoplasmic) is located at residue Asn-213.

It localises to the membrane. This chain is Putative transmembrane protein DDB_G0267860, found in Dictyostelium discoideum (Social amoeba).